Reading from the N-terminus, the 634-residue chain is Pentatricopeptide repeat-containing protein At5g14080 (634 aa).

PPR repeat units lie at residues 81–115 (DSIS…KILL), 116–150 (DSSV…GQEI), 151–185 (HPDV…GVSL), 186–220 (NTLG…NLNI), 222–256 (GSII…DCKP), 257–291 (DFMA…GVAP), 292–326 (RSSD…KFPM), 327–360 (DNDI…GKLP), 361–395 (AIRT…GYFS), 396–430 (ELQS…GLAP), 431–465 (DVSL…GCKM), 466–500 (NLTT…GIEP), and 501–535 (DETI…DHKT).

The protein belongs to the PPR family. P subfamily.

This Arabidopsis thaliana (Mouse-ear cress) protein is Pentatricopeptide repeat-containing protein At5g14080.